The primary structure comprises 381 residues: Queuine tRNA-ribosyltransferase (381 aa).

Asp-103 acts as the Proton acceptor in catalysis. Substrate-binding positions include 103–107, Asp-157, Gln-200, and Gly-227; that span reads DSGGF. An RNA binding region spans residues 258–264; the sequence is GVGTYRE. The Nucleophile role is filled by Asp-277. The segment at 282–286 is RNA binding; important for wobble base 34 recognition; that stretch reads TRLAR. Zn(2+)-binding residues include Cys-315, Cys-317, Cys-320, and His-346.

It belongs to the queuine tRNA-ribosyltransferase family. Homodimer. Within each dimer, one monomer is responsible for RNA recognition and catalysis, while the other monomer binds to the replacement base PreQ1. Zn(2+) serves as cofactor.

The enzyme catalyses 7-aminomethyl-7-carbaguanine + guanosine(34) in tRNA = 7-aminomethyl-7-carbaguanosine(34) in tRNA + guanine. Its pathway is tRNA modification; tRNA-queuosine biosynthesis. Catalyzes the base-exchange of a guanine (G) residue with the queuine precursor 7-aminomethyl-7-deazaguanine (PreQ1) at position 34 (anticodon wobble position) in tRNAs with GU(N) anticodons (tRNA-Asp, -Asn, -His and -Tyr). Catalysis occurs through a double-displacement mechanism. The nucleophile active site attacks the C1' of nucleotide 34 to detach the guanine base from the RNA, forming a covalent enzyme-RNA intermediate. The proton acceptor active site deprotonates the incoming PreQ1, allowing a nucleophilic attack on the C1' of the ribose to form the product. After dissociation, two additional enzymatic reactions on the tRNA convert PreQ1 to queuine (Q), resulting in the hypermodified nucleoside queuosine (7-(((4,5-cis-dihydroxy-2-cyclopenten-1-yl)amino)methyl)-7-deazaguanosine). The sequence is that of Queuine tRNA-ribosyltransferase from Cyanothece sp. (strain PCC 7425 / ATCC 29141).